A 188-amino-acid polypeptide reads, in one-letter code: NANOG neighbor homeobox (188 aa).

The disordered stretch occupies residues 28-106; sequence ETILANKKQS…NEKQKQYPEK (79 aa). Residues 57 to 106 are compositionally biased toward basic and acidic residues; sequence QNGKQKWREEGEAGRKREREKEEKNEKELQDEQENKRKRENEKQKQYPEK. The homeobox DNA-binding region spans 102–161; that stretch reads QYPEKRLVSKSLMHTLWAKFKLNRCPTIQESLSLSFEFDMTHKQISQWFCKTRKKYNKEM.

The protein localises to the nucleus. This Homo sapiens (Human) protein is NANOG neighbor homeobox (NANOGNB).